The following is a 333-amino-acid chain: Fructose-1,6-bisphosphatase class 1 (333 aa).

The Mg(2+) site is built by Glu92, Asp113, Leu115, and Asp116. Substrate is bound by residues 116–119 (DGSS), Asn209, Tyr242, and Lys272. Glu278 serves as a coordination point for Mg(2+).

Belongs to the FBPase class 1 family. In terms of assembly, homotetramer. The cofactor is Mg(2+).

The protein localises to the cytoplasm. It catalyses the reaction beta-D-fructose 1,6-bisphosphate + H2O = beta-D-fructose 6-phosphate + phosphate. It functions in the pathway carbohydrate biosynthesis; Calvin cycle. The protein is Fructose-1,6-bisphosphatase class 1 of Pelodictyon phaeoclathratiforme (strain DSM 5477 / BU-1).